The following is a 313-amino-acid chain: Ribosomal RNA small subunit methyltransferase H (313 aa).

Residues 35–37 (GGH), Asp55, Phe81, Asp103, and Gln110 each bind S-adenosyl-L-methionine.

It belongs to the methyltransferase superfamily. RsmH family.

The protein resides in the cytoplasm. The catalysed reaction is cytidine(1402) in 16S rRNA + S-adenosyl-L-methionine = N(4)-methylcytidine(1402) in 16S rRNA + S-adenosyl-L-homocysteine + H(+). Functionally, specifically methylates the N4 position of cytidine in position 1402 (C1402) of 16S rRNA. This is Ribosomal RNA small subunit methyltransferase H from Pseudomonas syringae pv. tomato (strain ATCC BAA-871 / DC3000).